The primary structure comprises 193 residues: uncharacterized protein (193 aa).

Residues 1-84 form a disordered region; the sequence is MTSKCSKWHE…RRSNQRIQLY (84 aa). The segment covering 43-78 has biased composition (basic residues); that stretch reads SSPRRSSPRRSPRRSSPRRSSPRRSSPRRSSPRRSN.

It belongs to the IIV-6 378R family.

This is an uncharacterized protein from Invertebrate iridescent virus 6 (IIV-6).